Here is a 242-residue protein sequence, read N- to C-terminus: Small ribosomal subunit protein uS2 (242 aa).

This sequence belongs to the universal ribosomal protein uS2 family.

This Shewanella oneidensis (strain ATCC 700550 / JCM 31522 / CIP 106686 / LMG 19005 / NCIMB 14063 / MR-1) protein is Small ribosomal subunit protein uS2.